The sequence spans 369 residues: Anhydro-N-acetylmuramic acid kinase (369 aa).

12–19 (GTSLDGVD) contributes to the ATP binding site.

The protein belongs to the anhydro-N-acetylmuramic acid kinase family.

The enzyme catalyses 1,6-anhydro-N-acetyl-beta-muramate + ATP + H2O = N-acetyl-D-muramate 6-phosphate + ADP + H(+). Its pathway is amino-sugar metabolism; 1,6-anhydro-N-acetylmuramate degradation. It participates in cell wall biogenesis; peptidoglycan recycling. Functionally, catalyzes the specific phosphorylation of 1,6-anhydro-N-acetylmuramic acid (anhMurNAc) with the simultaneous cleavage of the 1,6-anhydro ring, generating MurNAc-6-P. Is required for the utilization of anhMurNAc either imported from the medium or derived from its own cell wall murein, and thus plays a role in cell wall recycling. This Escherichia coli O6:K15:H31 (strain 536 / UPEC) protein is Anhydro-N-acetylmuramic acid kinase.